The primary structure comprises 76 residues: uncharacterized protein (76 aa).

A signal peptide spans 1 to 22; the sequence is MFTKALSVVLLTCALFSGQLMA.

This is an uncharacterized protein from Escherichia coli O157:H7.